Reading from the N-terminus, the 446-residue chain is Phosphoglucosamine mutase (446 aa).

Ser-100 functions as the Phosphoserine intermediate in the catalytic mechanism. Mg(2+) is bound by residues Ser-100, Asp-241, Asp-243, and Asp-245. A Phosphoserine modification is found at Ser-100.

It belongs to the phosphohexose mutase family. Requires Mg(2+) as cofactor. Post-translationally, activated by phosphorylation.

It catalyses the reaction alpha-D-glucosamine 1-phosphate = D-glucosamine 6-phosphate. Its function is as follows. Catalyzes the conversion of glucosamine-6-phosphate to glucosamine-1-phosphate. The polypeptide is Phosphoglucosamine mutase (Methylobacterium nodulans (strain LMG 21967 / CNCM I-2342 / ORS 2060)).